Consider the following 736-residue polypeptide: Copper-exporting P-type ATPase (736 aa).

The segment covering 1–17 (MKHDHHQGHTHSGKGHA) has biased composition (basic residues). The tract at residues 1-32 (MKHDHHQGHTHSGKGHACHHEHNSPKTQQASS) is disordered. 6 helical membrane-spanning segments follow: residues 85-105 (FWIALMLTIPVVILEMGGHGL), 114-134 (SSWIQLLLATPVVLWGGWPFF), 149-169 (FTLIAMGIGVAWIYSMVAVLW), 183-203 (VVAVYFEAAAVITTLVLLGQV), 341-361 (GWFVPAVILVAVLSFIVWALL), and 369-389 (YGLIAAVSVLIIACPCALGLA). Residue D426 is the 4-aspartylphosphate intermediate of the active site. D426, T428, and D624 together coordinate Mg(2+). A run of 2 helical transmembrane segments spans residues 682 to 702 (LFFAFIYNVLGVPLAAGVLYP) and 706 to 726 (LLLSPMIAAAAMALSSVSVII).

The protein belongs to the cation transport ATPase (P-type) (TC 3.A.3) family. Type IB subfamily. The cofactor is Mg(2+).

It is found in the cell inner membrane. It carries out the reaction Cu(+)(in) + ATP + H2O = Cu(+)(out) + ADP + phosphate + H(+). Its activity is regulated as follows. Activated by phospholipids, Mg(2+) and Cu(+). In terms of biological role, couples the hydrolysis of ATP with the export of copper. This is Copper-exporting P-type ATPase from Legionella pneumophila subsp. pneumophila (strain Philadelphia 1 / ATCC 33152 / DSM 7513).